The following is a 215-amino-acid chain: NADH-quinone oxidoreductase subunit C (215 aa).

This sequence belongs to the complex I 30 kDa subunit family. In terms of assembly, NDH-1 is composed of 14 different subunits. Subunits NuoB, C, D, E, F, and G constitute the peripheral sector of the complex.

The protein resides in the cell inner membrane. It catalyses the reaction a quinone + NADH + 5 H(+)(in) = a quinol + NAD(+) + 4 H(+)(out). In terms of biological role, NDH-1 shuttles electrons from NADH, via FMN and iron-sulfur (Fe-S) centers, to quinones in the respiratory chain. The immediate electron acceptor for the enzyme in this species is believed to be ubiquinone. Couples the redox reaction to proton translocation (for every two electrons transferred, four hydrogen ions are translocated across the cytoplasmic membrane), and thus conserves the redox energy in a proton gradient. The chain is NADH-quinone oxidoreductase subunit C from Bordetella parapertussis (strain 12822 / ATCC BAA-587 / NCTC 13253).